Here is a 440-residue protein sequence, read N- to C-terminus: UDP-N-acetylmuramoylalanine--D-glutamate ligase (440 aa).

128–134 (GTNGKTT) is a binding site for ATP.

Belongs to the MurCDEF family.

The protein resides in the cytoplasm. The catalysed reaction is UDP-N-acetyl-alpha-D-muramoyl-L-alanine + D-glutamate + ATP = UDP-N-acetyl-alpha-D-muramoyl-L-alanyl-D-glutamate + ADP + phosphate + H(+). The protein operates within cell wall biogenesis; peptidoglycan biosynthesis. Functionally, cell wall formation. Catalyzes the addition of glutamate to the nucleotide precursor UDP-N-acetylmuramoyl-L-alanine (UMA). This is UDP-N-acetylmuramoylalanine--D-glutamate ligase from Lawsonia intracellularis (strain PHE/MN1-00).